A 257-amino-acid chain; its full sequence is uncharacterized protein (257 aa).

The chain crosses the membrane as a helical span at residues 7–27 (LFLCVSFLLITIFIGGGGFMN).

It belongs to the staphylococcal tandem lipoprotein family.

It is found in the cell membrane. This is an uncharacterized protein from Staphylococcus epidermidis (strain ATCC 12228 / FDA PCI 1200).